A 143-amino-acid chain; its full sequence is MKLNTLAPAAGSKSAPKRLGRGIGSGLGKTSGKGHKGQKARSGGYHKVGFEGGQMPLQRRLPKFGFPSASKRYVAEIRLHELNNVVADEVTLDTLKDFGLIRKDIKTVKVIASGEIQKAVSLKGIACTKGAKEAIEKAGGKVE.

Residues Met-1–Gly-52 are disordered. Residues Arg-21–Ser-31 show a composition bias toward gly residues.

Belongs to the universal ribosomal protein uL15 family. In terms of assembly, part of the 50S ribosomal subunit.

Functionally, binds to the 23S rRNA. In Francisella tularensis subsp. holarctica (strain FTNF002-00 / FTA), this protein is Large ribosomal subunit protein uL15.